Reading from the N-terminus, the 103-residue chain is Small ribosomal subunit protein uS10 (103 aa).

This sequence belongs to the universal ribosomal protein uS10 family. Part of the 30S ribosomal subunit.

Its function is as follows. Involved in the binding of tRNA to the ribosomes. The sequence is that of Small ribosomal subunit protein uS10 from Magnetococcus marinus (strain ATCC BAA-1437 / JCM 17883 / MC-1).